A 383-amino-acid chain; its full sequence is Lipid-A-disaccharide synthase (383 aa).

It belongs to the LpxB family.

It catalyses the reaction 2-N,3-O-bis[(3R)-3-hydroxytetradecanoyl]-alpha-D-glucosaminyl 1-phosphate + UDP-2-N,3-O-bis[(3R)-3-hydroxytetradecanoyl]-alpha-D-glucosamine = lipid A disaccharide (E. coli) + UDP + H(+). It carries out the reaction a lipid X + a UDP-2-N,3-O-bis[(3R)-3-hydroxyacyl]-alpha-D-glucosamine = a lipid A disaccharide + UDP + H(+). The protein operates within glycolipid biosynthesis; lipid IV(A) biosynthesis; lipid IV(A) from (3R)-3-hydroxytetradecanoyl-[acyl-carrier-protein] and UDP-N-acetyl-alpha-D-glucosamine: step 5/6. Its function is as follows. Condensation of UDP-2,3-diacylglucosamine and 2,3-diacylglucosamine-1-phosphate to form lipid A disaccharide, a precursor of lipid A, a phosphorylated glycolipid that anchors the lipopolysaccharide to the outer membrane of the cell. This Klebsiella pneumoniae subsp. pneumoniae (strain ATCC 700721 / MGH 78578) protein is Lipid-A-disaccharide synthase.